A 336-amino-acid chain; its full sequence is NADH-quinone oxidoreductase subunit H (336 aa).

8 helical membrane-spanning segments follow: residues 4-24, 75-95, 108-128, 154-174, 181-201, 233-253, 272-292, and 308-328; these read YILW…LVVA, YLFF…WAVI, LGLL…VIAG, MGFA…TGII, IWHW…IAGI, LFFL…SIMF, FVPG…MFLW, and LGWK…ACMV.

This sequence belongs to the complex I subunit 1 family. NDH-1 is composed of 14 different subunits. Subunits NuoA, H, J, K, L, M, N constitute the membrane sector of the complex.

The protein resides in the cell inner membrane. The enzyme catalyses a quinone + NADH + 5 H(+)(in) = a quinol + NAD(+) + 4 H(+)(out). Its function is as follows. NDH-1 shuttles electrons from NADH, via FMN and iron-sulfur (Fe-S) centers, to quinones in the respiratory chain. The immediate electron acceptor for the enzyme in this species is believed to be ubiquinone. Couples the redox reaction to proton translocation (for every two electrons transferred, four hydrogen ions are translocated across the cytoplasmic membrane), and thus conserves the redox energy in a proton gradient. This subunit may bind ubiquinone. This is NADH-quinone oxidoreductase subunit H from Francisella tularensis subsp. tularensis (strain FSC 198).